The sequence spans 331 residues: tRNA-cytidine(32) 2-sulfurtransferase (331 aa).

The tract at residues 1–33 (MNAPHMNDTAADAATLDDAAAPAGRPALTRREQ) is disordered. Positions 8–23 (DTAADAATLDDAAAPA) are enriched in low complexity. The short motif at 71-76 (SGGKDS) is the PP-loop motif element. Residues Cys-146, Cys-149, and Cys-237 each contribute to the [4Fe-4S] cluster site.

It belongs to the TtcA family. In terms of assembly, homodimer. Requires Mg(2+) as cofactor. [4Fe-4S] cluster is required as a cofactor.

Its subcellular location is the cytoplasm. It carries out the reaction cytidine(32) in tRNA + S-sulfanyl-L-cysteinyl-[cysteine desulfurase] + AH2 + ATP = 2-thiocytidine(32) in tRNA + L-cysteinyl-[cysteine desulfurase] + A + AMP + diphosphate + H(+). The protein operates within tRNA modification. Functionally, catalyzes the ATP-dependent 2-thiolation of cytidine in position 32 of tRNA, to form 2-thiocytidine (s(2)C32). The sulfur atoms are provided by the cysteine/cysteine desulfurase (IscS) system. In Burkholderia cenocepacia (strain HI2424), this protein is tRNA-cytidine(32) 2-sulfurtransferase.